We begin with the raw amino-acid sequence, 263 residues long: UPF0739 protein C1orf74 homolog (263 aa).

Belongs to the UPF0739 family.

This is UPF0739 protein C1orf74 homolog from Mus musculus (Mouse).